Here is a 64-residue protein sequence, read N- to C-terminus: MKISELRDKSVEELTGLLDEKQLDAFRLRMAKATGQLGSTHEVRANRRAIAQIKTLINEKQRGA.

This sequence belongs to the universal ribosomal protein uL29 family.

This chain is Large ribosomal subunit protein uL29, found in Psychrobacter sp. (strain PRwf-1).